The chain runs to 362 residues: 3-dehydroquinate synthase (362 aa).

NAD(+) is bound by residues 74-79 (DGEGYK), 108-112 (GVIGD), 132-133 (TT), lysine 145, lysine 154, and 172-175 (TLDT). The Zn(2+) site is built by glutamate 187, histidine 250, and histidine 267.

It belongs to the sugar phosphate cyclases superfamily. Dehydroquinate synthase family. It depends on Co(2+) as a cofactor. Zn(2+) serves as cofactor. NAD(+) is required as a cofactor.

It is found in the cytoplasm. The enzyme catalyses 7-phospho-2-dehydro-3-deoxy-D-arabino-heptonate = 3-dehydroquinate + phosphate. It participates in metabolic intermediate biosynthesis; chorismate biosynthesis; chorismate from D-erythrose 4-phosphate and phosphoenolpyruvate: step 2/7. Catalyzes the conversion of 3-deoxy-D-arabino-heptulosonate 7-phosphate (DAHP) to dehydroquinate (DHQ). The polypeptide is 3-dehydroquinate synthase (Citrifermentans bemidjiense (strain ATCC BAA-1014 / DSM 16622 / JCM 12645 / Bem) (Geobacter bemidjiensis)).